We begin with the raw amino-acid sequence, 583 residues long: DNA ligase (583 aa).

ATP is bound at residue glutamate 249. Residue lysine 251 is the N6-AMP-lysine intermediate of the active site. Residues arginine 256, arginine 271, glutamate 301, phenylalanine 341, arginine 416, and lysine 422 each contribute to the ATP site.

This sequence belongs to the ATP-dependent DNA ligase family. It depends on Mg(2+) as a cofactor.

The catalysed reaction is ATP + (deoxyribonucleotide)n-3'-hydroxyl + 5'-phospho-(deoxyribonucleotide)m = (deoxyribonucleotide)n+m + AMP + diphosphate.. DNA ligase that seals nicks in double-stranded DNA during DNA replication, DNA recombination and DNA repair. The sequence is that of DNA ligase from Pyrobaculum calidifontis (strain DSM 21063 / JCM 11548 / VA1).